The chain runs to 22 residues: Antimicrobial peptide 4 (22 aa).

In terms of tissue distribution, expressed by the skin glands.

It is found in the secreted. Has very strong antimicrobial activity against Gram-positive bacterium S.aureus and yeast C.albicans, and very weak activity against Gram-negative bacterium E.coli. Has strong hemolytic activity against human red blood cells. In Xenopus tropicalis (Western clawed frog), this protein is Antimicrobial peptide 4.